Reading from the N-terminus, the 123-residue chain is Large ribosomal subunit protein bL19 (123 aa).

The protein belongs to the bacterial ribosomal protein bL19 family.

Functionally, this protein is located at the 30S-50S ribosomal subunit interface and may play a role in the structure and function of the aminoacyl-tRNA binding site. The chain is Large ribosomal subunit protein bL19 from Bdellovibrio bacteriovorus (strain ATCC 15356 / DSM 50701 / NCIMB 9529 / HD100).